We begin with the raw amino-acid sequence, 382 residues long: Carbamoyl phosphate synthase small chain (382 aa).

The tract at residues 1–189 is CPSase; it reads MIKSALLVLE…GLPEAKSEDD (189 aa). 2 residues coordinate L-glutamine: Ser47 and Gly241. The Glutamine amidotransferase type-1 domain occupies 193–380; that stretch reads HVVAYDFGAK…IELIKHYRSS (188 aa). Cys269 serves as the catalytic Nucleophile. Residues Leu270, Gln273, Asn311, Gly313, and Phe314 each contribute to the L-glutamine site. Active-site residues include His353 and Glu355.

The protein belongs to the CarA family. As to quaternary structure, composed of two chains; the small (or glutamine) chain promotes the hydrolysis of glutamine to ammonia, which is used by the large (or ammonia) chain to synthesize carbamoyl phosphate. Tetramer of heterodimers (alpha,beta)4.

The enzyme catalyses hydrogencarbonate + L-glutamine + 2 ATP + H2O = carbamoyl phosphate + L-glutamate + 2 ADP + phosphate + 2 H(+). It catalyses the reaction L-glutamine + H2O = L-glutamate + NH4(+). It functions in the pathway amino-acid biosynthesis; L-arginine biosynthesis; carbamoyl phosphate from bicarbonate: step 1/1. Its pathway is pyrimidine metabolism; UMP biosynthesis via de novo pathway; (S)-dihydroorotate from bicarbonate: step 1/3. In terms of biological role, small subunit of the glutamine-dependent carbamoyl phosphate synthetase (CPSase). CPSase catalyzes the formation of carbamoyl phosphate from the ammonia moiety of glutamine, carbonate, and phosphate donated by ATP, constituting the first step of 2 biosynthetic pathways, one leading to arginine and/or urea and the other to pyrimidine nucleotides. The small subunit (glutamine amidotransferase) binds and cleaves glutamine to supply the large subunit with the substrate ammonia. This is Carbamoyl phosphate synthase small chain from Salmonella typhi.